Reading from the N-terminus, the 1541-residue chain is ATP-binding cassette sub-family C member 2 (1541 aa).

The Extracellular portion of the chain corresponds to 1–26 (MDKFCNSTFWDLSLLESPEADLPLCF). Asparagine 6 carries an N-linked (GlcNAc...) asparagine glycan. Residues 27 to 47 (EQTVLVWIPLGFLWLLAPWQL) form a helical membrane-spanning segment. Topologically, residues 48–67 (YSVYRSRTKRSSITKFYLAK) are cytoplasmic. Residues 68 to 88 (QVFVVFLLILAAIDLSLALTE) traverse the membrane as a helical segment. The Extracellular segment spans residues 89–92 (DTGQ). Residues 93-113 (ATVPPVRYTNPILYLCTWLLV) form a helical membrane-spanning segment. Residues 114–125 (LAVQHSRQWCVR) lie on the Cytoplasmic side of the membrane. A helical transmembrane segment spans residues 126–146 (KNSWFLSLFWILSVLCGVFQF). Topologically, residues 147–164 (QTLIRALLKDSKSNMAYS) are extracellular. Residues 165–185 (YLFFVSYGFQIVLLILTAFSG) form a helical membrane-spanning segment. The Cytoplasmic segment spans residues 186–309 (PSDSTQTPSV…DYPKSWLIKS (124 aa)). Residues serine 279 and serine 281 each carry the phosphoserine modification. The helical transmembrane segment at 310–330 (LFKTFHVVILKSFILKLIHDL) threads the bilayer. Residues 318–601 (ILKSFILKLI…LPMVTSSILQ (284 aa)) form the ABC transmembrane type-1 1 domain. Residues 331–356 (LVFLNPQLLKLLIGFVKSSNSYVWFG) lie on the Extracellular side of the membrane. Residues 357–377 (YICAILMFAVTLIQSFCLQSY) traverse the membrane as a helical segment. Over 378-433 (FQHCFVLGMCVRTTVMSSIYKKALTLSNLARKQYTIGETVNLMSVDSQKLMDATNY) the chain is Cytoplasmic. Residues 434–454 (MQLVWSSVIQITLSIFFLWRE) traverse the membrane as a helical segment. Residues 455–457 (LGP) are Extracellular-facing. A helical membrane pass occupies residues 458-478 (SILAGVGVMVLLIPVNGVLAT). The Cytoplasmic portion of the chain corresponds to 479 to 540 (KIRNIQVQNM…NLLRFGQLQS (62 aa)). The helical transmembrane segment at 541 to 561 (LLIFILQITPILVSVVTFSVY) threads the bilayer. At 562-583 (VLVDSANVLNAEKAFTSITLFN) the chain is on the extracellular side. The helical transmembrane segment at 584–604 (ILRFPLSMLPMVTSSILQASV) threads the bilayer. At 605–967 (SVDRLERYLG…VKFSIYLKYL (363 aa)) the chain is on the cytoplasmic side. The region spanning 633-857 (VKFSEASFTW…KGVFARNWKT (225 aa)) is the ABC transporter 1 domain. 667–674 (GTVGSGKS) serves as a coordination point for ATP. 2 disordered regions span residues 862–881 (SGPE…DDDD) and 901–923 (RENS…GKSL). Residue serine 874 is modified to Phosphoserine. Over residues 906 to 915 (RRTLSRSSRS) the composition is skewed to low complexity. Phosphoserine occurs at positions 922 and 926. The helical transmembrane segment at 968-988 (QAVGWWSILFIILFYGLNNVA) threads the bilayer. Positions 975 to 1260 (ILFIILFYGL…LVRMTSEAET (286 aa)) constitute an ABC transmembrane type-1 2 domain. Residues 989–1029 (FIGSNLWLSAWTSDSDNLNGTNNSSSHRDMRIGVFGALGLA) lie on the Extracellular side of the membrane. N-linked (GlcNAc...) asparagine glycosylation is found at asparagine 1007, asparagine 1010, and asparagine 1011. The chain crosses the membrane as a helical span at residues 1030 to 1050 (QGICLLISTLWSIYACRNASK). Over 1051–1093 (ALHGQLLTNILRAPMRFFDTTPTGRIVNRFSGDISTVDDLLPQ) the chain is Cytoplasmic. The chain crosses the membrane as a helical span at residues 1094-1114 (TLRSWMMCFFGIAGTLVMICM). A topological domain (extracellular) is located at residue alanine 1115. A helical transmembrane segment spans residues 1116–1136 (TPVFAIIIIPLSILYISVQVF). The Cytoplasmic portion of the chain corresponds to 1137-1207 (YVATSRQLRR…TSNRWLAIRL (71 aa)). The helical transmembrane segment at 1208-1228 (ELVGNLVVFCSALLLVIYRKT) threads the bilayer. The Extracellular segment spans residues 1229–1230 (LT). Residues 1231-1251 (GDVVGFVLSNALNITQTLNWL) form a helical membrane-spanning segment. Residues 1252–1541 (VRMTSEAETN…GIENVNHTEL (290 aa)) are Cytoplasmic-facing. In terms of domain architecture, ABC transporter 2 spans 1296–1530 (IQFNNYQVRY…RGSFYLMAKE (235 aa)). Residue 1330–1337 (GRTGAGKS) participates in ATP binding. Phosphoserine is present on serine 1434.

The protein belongs to the ABC transporter superfamily. ABCC family. Conjugate transporter (TC 3.A.1.208) subfamily. In terms of tissue distribution, mainly expressed in the liver.

It localises to the apical cell membrane. The enzyme catalyses an S-substituted glutathione(in) + ATP + H2O = an S-substituted glutathione(out) + ADP + phosphate + H(+). It catalyses the reaction taurolithocholate 3-sulfate(in) + ATP + H2O = taurolithocholate 3-sulfate(out) + ADP + phosphate + H(+). It carries out the reaction ATP + H2O + xenobioticSide 1 = ADP + phosphate + xenobioticSide 2.. The catalysed reaction is 17beta-estradiol 17-O-(beta-D-glucuronate)(in) + ATP + H2O = 17beta-estradiol 17-O-(beta-D-glucuronate)(out) + ADP + phosphate + H(+). The enzyme catalyses leukotriene C4(in) + ATP + H2O = leukotriene C4(out) + ADP + phosphate + H(+). It catalyses the reaction (4Z,15Z)-bilirubin IXalpha C8-beta-D-glucuronoside(in) + ATP + H2O = (4Z,15Z)-bilirubin IXalpha C8-beta-D-glucuronoside(out) + ADP + phosphate + H(+). It carries out the reaction (4Z,15Z)-bilirubin IXalpha C8,C12-beta-D-bisglucuronoside(in) + ATP + H2O = (4Z,15Z)-bilirubin IXalpha C8,C12-beta-D-bisglucuronoside(out) + ADP + phosphate + H(+). Functionally, ATP-dependent transporter of the ATP-binding cassette (ABC) family that binds and hydrolyzes ATP to enable active transport of various substrates including many drugs, toxicants and endogenous compound across cell membranes. Transports a wide variety of conjugated organic anions such as sulfate-, glucuronide- and glutathione (GSH)-conjugates of endo- and xenobiotics substrates. Mediates hepatobiliary excretion of mono- and bis-glucuronidated bilirubin molecules and therefore play an important role in bilirubin detoxification. Also mediates hepatobiliary excretion of others glucuronide conjugates such as 17beta-estradiol 17-glucosiduronic acid and leukotriene C4. Transports sulfated bile salt such as taurolithocholate sulfate. Transports various anticancer drugs, such as anthracycline, vinca alkaloid and methotrexate and HIV-drugs such as protease inhibitors. The chain is ATP-binding cassette sub-family C member 2 from Rattus norvegicus (Rat).